Consider the following 89-residue polypeptide: UPF0335 protein CCNA_03428 (89 aa).

Belongs to the UPF0335 family.

The sequence is that of UPF0335 protein CCNA_03428 from Caulobacter vibrioides (strain NA1000 / CB15N) (Caulobacter crescentus).